Here is a 129-residue protein sequence, read N- to C-terminus: Histone H3 (129 aa).

The disordered stretch occupies residues 1-36 (MSRTKETARAKRTITSKKSKKAPSGASGVKRSHRRW). A compositionally biased stretch (basic residues) spans 10-21 (AKRTITSKKSKK).

This sequence belongs to the histone H3 family. In terms of assembly, the nucleosome is a histone octamer containing two molecules each of H2A, H2B, H3 and H4 assembled in one H3-H4 heterotetramer and two H2A-H2B heterodimers. The octamer wraps approximately 147 bp of DNA.

The protein localises to the nucleus. It is found in the chromosome. Its function is as follows. Core component of nucleosome. Nucleosomes wrap and compact DNA into chromatin, limiting DNA accessibility to the cellular machineries which require DNA as a template. Histones thereby play a central role in transcription regulation, DNA repair, DNA replication and chromosomal stability. DNA accessibility is regulated via a complex set of post-translational modifications of histones, also called histone code, and nucleosome remodeling. The protein is Histone H3 of Leishmania infantum.